The primary structure comprises 126 residues: Large ribosomal subunit protein bL17 (126 aa).

The protein belongs to the bacterial ribosomal protein bL17 family. In terms of assembly, part of the 50S ribosomal subunit. Contacts protein L32.

This chain is Large ribosomal subunit protein bL17, found in Aliivibrio salmonicida (strain LFI1238) (Vibrio salmonicida (strain LFI1238)).